We begin with the raw amino-acid sequence, 433 residues long: Transcobalamin-1 (433 aa).

Positions 1-23 are cleaved as a signal peptide; it reads MRQSHQLPLVGLLLFSFIPSQLC. A globular N-terminal alpha domain region spans residues 24 to 310; the sequence is EICEVSEENY…DINKDSSCVS (287 aa). 3 disulfide bridges follow: cysteine 26–cysteine 265, cysteine 105–cysteine 308, and cysteine 155–cysteine 197. 142–146 provides a ligand contact to cyanocob(III)alamin; sequence TNYYQ. Residue asparagine 160 is glycosylated (N-linked (GlcNAc...) asparagine). Aspartate 186 contributes to the cyanocob(III)alamin binding site. Residue asparagine 216 is glycosylated (N-linked (GlcNAc...) asparagine). Residues asparagine 240 and glutamine 289 each coordinate cyanocob(III)alamin. The interval 311 to 332 is flexible linker; it reads ASGNFNISADEPITVTPPDSQS. 6 N-linked (GlcNAc...) asparagine glycosylation sites follow: asparagine 316, asparagine 337, asparagine 343, asparagine 349, asparagine 354, and asparagine 369. The globular C-terminal beta domain stretch occupies residues 333 to 433; it reads YISVNYSVRI…ENLEVRWSKY (101 aa). 385 to 386 is a cyanocob(III)alamin binding site; it reads YI. A disulfide bond links cysteine 388 and cysteine 393. Cyanocob(III)alamin-binding positions include 402 to 404, leucine 411, and tyrosine 433; that span reads WEL.

The protein belongs to the eukaryotic cobalamin transport proteins family. Contains about 30% carbohydrates. As to expression, produced by the salivary glands of the oral cavity, in response to ingestion of food. Major constituent of secondary granules in neutrophils.

The protein resides in the secreted. Functionally, binds vitamin B12 with femtomolar affinity and protects it from the acidic environment of the stomach. In Homo sapiens (Human), this protein is Transcobalamin-1 (TCN1).